The sequence spans 213 residues: Small ribosomal subunit protein uS3c (213 aa).

The 71-residue stretch at Ile39–Gln109 folds into the KH type-2 domain.

This sequence belongs to the universal ribosomal protein uS3 family. Part of the 30S ribosomal subunit.

It is found in the plastid. Its subcellular location is the chloroplast. In Mesostigma viride (Green alga), this protein is Small ribosomal subunit protein uS3c (rps3).